The following is a 371-amino-acid chain: MCGSPNTTVGNGTRALILVGGYGTRLRPLTLSTPKPLVEFANKPILLHQLEALVDAGCRQVILAVSYRAEQMEKELKVEADKLGVELIFSHETEPLGTAGPLALAKSILSASPEPFFVLNSDVICDFPFKQLVQFHRNHGKEGTIVVTKVEEPSKYGVVLYDEDGCIKNFIEKPQEFVSNKINAGIYIFNPSVLERIEVKPTSIEKEVFPAMAEQQELYAMDLTGFWMDIGQPKDFLTGMCLYLSSLRQKQSPKLYTGPGVVGNVLVDPTATIGEGCRIGPNVTIGPDVIIEDGVCIKRATILKGAIVRSHSWLDSCIVGWRSTVGRWVRIEGITVLGEDVIVKDELYVNGGQVLPHKSIAASVPEPQIIM.

The interval 14-233 is substrate-binding domain; it reads RALILVGGYG…TGFWMDIGQP (220 aa). Aspartate 122 provides a ligand contact to GDP-alpha-D-mannose. Aspartate 122 is a binding site for Mg(2+). Lysine 173 is an active-site residue. Aspartate 229 provides a ligand contact to GDP-alpha-D-mannose. Aspartate 229 contributes to the Mg(2+) binding site. Positions 256-371 are hexapeptide repeat domain; the sequence is YTGPGVVGNV…ASVPEPQIIM (116 aa).

This sequence belongs to the transferase hexapeptide repeat family. As to quaternary structure, component of the GMPPA-GMPPB mannose-1-phosphate guanylyltransferase complex composed of 4 Gmppa subunits and 8 Gmppb subunits; the complex is organized into three layers, a central layer made up of 2 Gmppa dimers sandwiched between two layers each made up of 2 Gmppb dimers. Gmppb catalytic activity is reduced when part of the complex and binding of GDP-alpha-D-Mannose by Gmppa induces allosteric feedback inhibition of Gmppb. Mg(2+) is required as a cofactor.

It carries out the reaction alpha-D-mannose 1-phosphate + GTP + H(+) = GDP-alpha-D-mannose + diphosphate. It participates in nucleotide-sugar biosynthesis; GDP-alpha-D-mannose biosynthesis; GDP-alpha-D-mannose from alpha-D-mannose 1-phosphate (GTP route): step 1/1. Its activity is regulated as follows. Enzyme activity is reduced by incorporation into the GMPPA-GMPPB mannose-1-phosphate guanylyltransferase complex. Allosterically inhibited, when part of the GMPPA-GMPPB complex, by GDP-alpha-D-mannose binding to Gmppa. Its function is as follows. Catalytic subunit of the GMPPA-GMPPB mannose-1-phosphate guanylyltransferase complex. Catalyzes the formation of GDP-mannose, an essential precursor of glycan moieties of glycoproteins and glycolipids. Can catalyze the reverse reaction in vitro. Together with GMPPA regulates GDP-alpha-D-mannose levels. The sequence is that of Mannose-1-phosphate guanylyltransferase catalytic subunit beta from Drosophila pseudoobscura pseudoobscura (Fruit fly).